We begin with the raw amino-acid sequence, 311 residues long: Methionyl-tRNA formyltransferase (311 aa).

109 to 112 contacts (6S)-5,6,7,8-tetrahydrofolate; the sequence is SLLP.

The protein belongs to the Fmt family.

The enzyme catalyses L-methionyl-tRNA(fMet) + (6R)-10-formyltetrahydrofolate = N-formyl-L-methionyl-tRNA(fMet) + (6S)-5,6,7,8-tetrahydrofolate + H(+). Its function is as follows. Attaches a formyl group to the free amino group of methionyl-tRNA(fMet). The formyl group appears to play a dual role in the initiator identity of N-formylmethionyl-tRNA by promoting its recognition by IF2 and preventing the misappropriation of this tRNA by the elongation apparatus. The sequence is that of Methionyl-tRNA formyltransferase from Staphylococcus aureus (strain bovine RF122 / ET3-1).